The sequence spans 330 residues: D-lactate dehydrogenase (330 aa).

NAD(+)-binding positions include 155–156, Asp175, 206–207, Asn212, 233–235, and Asp259; these read RI, MP, and MAR. Arg235 is a catalytic residue. The active site involves Glu264. His296 acts as the Proton donor in catalysis.

The protein belongs to the D-isomer specific 2-hydroxyacid dehydrogenase family.

The catalysed reaction is (R)-lactate + NAD(+) = pyruvate + NADH + H(+). This chain is D-lactate dehydrogenase (ldhD), found in Streptococcus agalactiae serotype III (strain NEM316).